A 315-amino-acid chain; its full sequence is ATP synthase gamma chain (315 aa).

The protein belongs to the ATPase gamma chain family. F-type ATPases have 2 components, CF(1) - the catalytic core - and CF(0) - the membrane proton channel. CF(1) has five subunits: alpha(3), beta(3), gamma(1), delta(1), epsilon(1). CF(0) has three main subunits: a, b and c.

It localises to the cell membrane. In terms of biological role, produces ATP from ADP in the presence of a proton gradient across the membrane. The gamma chain is believed to be important in regulating ATPase activity and the flow of protons through the CF(0) complex. This chain is ATP synthase gamma chain, found in Latilactobacillus sakei subsp. sakei (strain 23K) (Lactobacillus sakei subsp. sakei).